The following is a 150-amino-acid chain: NmrA-like family domain-containing protein 1 (150 aa).

Residues 7–12, 33–37, and Lys-71 each bind NADP(+); these read GATGAQ and RNPEQ.

This sequence belongs to the NmrA-type oxidoreductase family. In terms of assembly, homodimer. Interacts with ASS1. Interaction is enhanced by low NADPH/NADP(+) ratios, which results in inhibition of ASS1 activity.

Its subcellular location is the cytoplasm. It localises to the perinuclear region. The protein resides in the nucleus. In terms of biological role, redox sensor protein. Undergoes restructuring and subcellular redistribution in response to changes in intracellular NADPH/NADP(+) levels. At low NADPH concentrations the protein is found mainly as a monomer, and binds argininosuccinate synthase (ASS1), the enzyme involved in nitric oxide synthesis. Association with ASS1 impairs its activity and reduces the production of nitric oxide, which subsecuently prevents apoptosis. Under normal NADPH concentrations, the protein is found as a dimer and hides the binding site for ASS1. The homodimer binds one molecule of NADPH. Has higher affinity for NADPH than for NADP(+). Binding to NADPH is necessary to form a stable dimer. In Rattus norvegicus (Rat), this protein is NmrA-like family domain-containing protein 1.